The sequence spans 429 residues: Glutamate-1-semialdehyde 2,1-aminomutase (429 aa).

Lysine 267 is modified (N6-(pyridoxal phosphate)lysine).

Belongs to the class-III pyridoxal-phosphate-dependent aminotransferase family. HemL subfamily. In terms of assembly, homodimer. Pyridoxal 5'-phosphate is required as a cofactor.

Its subcellular location is the cytoplasm. The catalysed reaction is (S)-4-amino-5-oxopentanoate = 5-aminolevulinate. It functions in the pathway porphyrin-containing compound metabolism; protoporphyrin-IX biosynthesis; 5-aminolevulinate from L-glutamyl-tRNA(Glu): step 2/2. This is Glutamate-1-semialdehyde 2,1-aminomutase from Herpetosiphon aurantiacus (strain ATCC 23779 / DSM 785 / 114-95).